The following is a 336-amino-acid chain: Dihydroorotate dehydrogenase (quinone) (336 aa).

FMN contacts are provided by residues 62-66 (AGLDK) and T86. K66 contacts substrate. Substrate is bound at residue 111 to 115 (NRMGF). 2 residues coordinate FMN: N139 and N172. N172 lines the substrate pocket. The active-site Nucleophile is S175. N177 lines the substrate pocket. Residues K217 and T245 each coordinate FMN. 246 to 247 (NT) contacts substrate. FMN is bound by residues G268, G297, and 318–319 (YS).

Belongs to the dihydroorotate dehydrogenase family. Type 2 subfamily. Monomer. It depends on FMN as a cofactor.

It localises to the cell membrane. The catalysed reaction is (S)-dihydroorotate + a quinone = orotate + a quinol. Its pathway is pyrimidine metabolism; UMP biosynthesis via de novo pathway; orotate from (S)-dihydroorotate (quinone route): step 1/1. Its function is as follows. Catalyzes the conversion of dihydroorotate to orotate with quinone as electron acceptor. The chain is Dihydroorotate dehydrogenase (quinone) from Salmonella gallinarum (strain 287/91 / NCTC 13346).